A 1125-amino-acid chain; its full sequence is Probable phospholipid-transporting ATPase IIB (1125 aa).

Residues 1–131 (MADGIPLNPV…IKNQKYNIVT (131 aa)) lie on the Cytoplasmic side of the membrane. The helical transmembrane segment at 132–152 (FVPGVLYQQFKFFLNLYFLVV) threads the bilayer. At 153-161 (ACSQFVPSL) the chain is on the extracellular side. The chain crosses the membrane as a helical span at residues 162 to 182 (KIGYLYTYWAPLGFVLAVTMV). Residues 183–369 (REAVDEVRRC…LDLELNRLTK (187 aa)) lie on the Cytoplasmic side of the membrane. The helical transmembrane segment at 370–390 (ALFLAQVVLSVVMVALQGFLG) threads the bilayer. Residues 391-395 (PWFRN) are Extracellular-facing. Residues 396-415 (LFRFVVLFSYIIPISLRVNL) form a helical membrane-spanning segment. Residues 416 to 928 (DMGKSAYGWM…ALGQFVMHRG (513 aa)) are Cytoplasmic-facing. Asp455 serves as the catalytic 4-aspartylphosphate intermediate. ATP contacts are provided by Asp455, Lys456, and Thr457. Asp455 lines the Mg(2+) pocket. Position 457 (Thr457) interacts with Mg(2+). Residues 500 to 511 (QSNGSSASSTPS) are compositionally biased toward low complexity. 2 disordered regions span residues 500–525 (QSNG…RKSV) and 552–574 (GANA…RTYQ). Positions 558–567 (ESTEADQDFS) are enriched in acidic residues. Glu580, Phe622, Lys627, Lys646, Arg675, Thr676, Thr755, Gly756, Asp757, Arg837, and Lys843 together coordinate ATP. Residue Asp863 participates in Mg(2+) binding. Positions 866 and 867 each coordinate ATP. Residue Asp867 coordinates Mg(2+). The chain crosses the membrane as a helical span at residues 929–949 (MIISTMQAVFSSIFYFASVPL). Residues 950–951 (YQ) lie on the Extracellular side of the membrane. A helical transmembrane segment spans residues 952 to 972 (GFLMVGYATIYTMFPVFSLVL). Topologically, residues 973-1001 (DQDVKPEMALLYPELYKDLTKGRSLSFKT) are cytoplasmic. The helical transmembrane segment at 1002–1022 (FLIWVLISIYQGGILMYGALV) threads the bilayer. Topologically, residues 1023–1030 (LFDQEFVH) are extracellular. A helical transmembrane segment spans residues 1031–1051 (VVAISFTALILTELLMVALTI). Residues 1052 to 1055 (RTWH) are Cytoplasmic-facing. A helical membrane pass occupies residues 1056–1076 (WLMVVAQLISLACYLASLAFL). At 1077-1088 (NEYFDLSFITTR) the chain is on the extracellular side. A helical membrane pass occupies residues 1089–1109 (VFLWKVCVITLVSCLPLYIIK). Residues 1110–1125 (YLKRKFSPPSYSKLSS) lie on the Cytoplasmic side of the membrane.

The protein belongs to the cation transport ATPase (P-type) (TC 3.A.3) family. Type IV subfamily. The cofactor is Mg(2+).

It is found in the golgi apparatus. Its subcellular location is the trans-Golgi network membrane. It carries out the reaction ATP + H2O + phospholipidSide 1 = ADP + phosphate + phospholipidSide 2.. The protein is Probable phospholipid-transporting ATPase IIB (atp9b) of Danio rerio (Zebrafish).